The sequence spans 25 residues: Secapin-1 (25 aa).

The cysteines at positions 9 and 20 are disulfide-linked.

As to expression, expressed by the venom gland.

It localises to the secreted. Serine protease inhibitor which exhibits antifibrinolytic, antielastolytic and antimicrobial activities. Displays antimicrobial activity against bacteria and fungi. Likely functions in the innate immune response to microbial infection and possibly in the venom, as an antifibrinolytic agent. The sequence is that of Secapin-1 from Apis mellifera (Honeybee).